The following is a 944-amino-acid chain: LPS-assembly protein LptD (944 aa).

The signal sequence occupies residues 1 to 33; that stretch reads MALKSPAFRRKFPLLVTGGLLALQPLATSFVVA. Positions 52 to 102 are disordered; the sequence is KATGNLPPRPVHPGAAAASSGAEAPGEVGEAQAEKPMLVTESKGRGLKSRS. Over residues 64–82 the composition is skewed to low complexity; sequence PGAAAASSGAEAPGEVGEA.

Belongs to the LptD family. In terms of assembly, component of the lipopolysaccharide transport and assembly complex. Interacts with LptE and LptA.

It localises to the cell outer membrane. Functionally, together with LptE, is involved in the assembly of lipopolysaccharide (LPS) at the surface of the outer membrane. This Pseudomonas entomophila (strain L48) protein is LPS-assembly protein LptD.